The sequence spans 940 residues: Isoleucine--tRNA ligase (940 aa).

The short motif at 58–68 (PYANGNIHIGH) is the 'HIGH' region element. Glu563 contributes to the L-isoleucyl-5'-AMP binding site. The short motif at 604–608 (KMSKS) is the 'KMSKS' region element. ATP is bound at residue Lys607. Cys903, Cys906, Cys923, and Cys926 together coordinate Zn(2+).

It belongs to the class-I aminoacyl-tRNA synthetase family. IleS type 1 subfamily. In terms of assembly, monomer. It depends on Zn(2+) as a cofactor.

It is found in the cytoplasm. It carries out the reaction tRNA(Ile) + L-isoleucine + ATP = L-isoleucyl-tRNA(Ile) + AMP + diphosphate. In terms of biological role, catalyzes the attachment of isoleucine to tRNA(Ile). As IleRS can inadvertently accommodate and process structurally similar amino acids such as valine, to avoid such errors it has two additional distinct tRNA(Ile)-dependent editing activities. One activity is designated as 'pretransfer' editing and involves the hydrolysis of activated Val-AMP. The other activity is designated 'posttransfer' editing and involves deacylation of mischarged Val-tRNA(Ile). In Buchnera aphidicola subsp. Acyrthosiphon pisum (strain APS) (Acyrthosiphon pisum symbiotic bacterium), this protein is Isoleucine--tRNA ligase.